Reading from the N-terminus, the 1005-residue chain is Ephrin type-A receptor 5 (1005 aa).

The segment at 1 to 24 (MRGSGPRGAGRRRTQGRGGGGDTP) is disordered. The N-terminal stretch at 1–26 (MRGSGPRGAGRRRTQGRGGGGDTPRV) is a signal peptide. At 27 to 575 (PASLAGCYSA…GASNDQSQIP (549 aa)) the chain is on the extracellular side. An Eph LBD domain is found at 62-240 (EVNLLDSRTV…YYKKCPSVVR (179 aa)). 6 N-linked (GlcNAc...) asparagine glycosylation sites follow: Asn-266, Asn-301, Asn-371, Asn-425, Asn-438, and Asn-463. 2 Fibronectin type-III domains span residues 359–469 (PPSA…TNQA) and 470–564 (APSP…TTPV). Residues 576-596 (IIGVSVTVGVILLAVMIGFLL) traverse the membrane as a helical segment. The Cytoplasmic segment spans residues 597 to 1005 (SGSCCECGCG…MDAVAQVTLE (409 aa)). Phosphotyrosine; by autocatalysis is present on residues Tyr-652 and Tyr-658. Residues 677 to 938 (ITIERVIGAG…DIVNMLDKLI (262 aa)) enclose the Protein kinase domain. ATP is bound by residues 683–691 (IGAGEFGEV) and Lys-709. Asp-802 functions as the Proton acceptor in the catalytic mechanism. Tyr-835 and Tyr-984 each carry phosphotyrosine; by autocatalysis. An SAM domain is found at 967–1005 (GAYRSVGEWLEATKMGRYTEIFMENGYSSMDAVAQVTLE).

Belongs to the protein kinase superfamily. Tyr protein kinase family. Ephrin receptor subfamily. As to quaternary structure, heterotetramer upon binding of the ligand. The heterotetramer is composed of an ephrin dimer and a receptor dimer. Oligomerization is probably required to induce biological responses. Interacts (via SAM domain) with SAMD5 (via SAM domain). Post-translationally, phosphorylated. Phosphorylation is stimulated by the ligand EFNA5. Dephosphorylation upon stimulation by glucose, inhibits EPHA5 forward signaling and results in insulin secretion. As to expression, almost exclusively expressed in the nervous system. Predominantly expressed in neurons.

Its subcellular location is the cell membrane. It is found in the cell projection. The protein resides in the axon. The protein localises to the dendrite. The catalysed reaction is L-tyrosyl-[protein] + ATP = O-phospho-L-tyrosyl-[protein] + ADP + H(+). In terms of biological role, receptor tyrosine kinase which binds promiscuously GPI-anchored ephrin-A family ligands residing on adjacent cells, leading to contact-dependent bidirectional signaling into neighboring cells. The signaling pathway downstream of the receptor is referred to as forward signaling while the signaling pathway downstream of the ephrin ligand is referred to as reverse signaling. Among GPI-anchored ephrin-A ligands, EFNA5 most probably constitutes the cognate/functional ligand for EPHA5. Functions as an axon guidance molecule during development and may be involved in the development of the retinotectal, entorhino-hippocampal and hippocamposeptal pathways. Together with EFNA5 plays also a role in synaptic plasticity in adult brain through regulation of synaptogenesis. In addition to its function in the nervous system, the interaction of EPHA5 with EFNA5 mediates communication between pancreatic islet cells to regulate glucose-stimulated insulin secretion. The sequence is that of Ephrin type-A receptor 5 (Epha5) from Rattus norvegicus (Rat).